Reading from the N-terminus, the 419-residue chain is Effector protein BipC (419 aa).

2 disordered regions span residues 62–94 and 338–402; these read VAGSGAQRVELARPKPDAQTRATDRRTVSGLER and LQSG…AKSQ. Composition is skewed to basic and acidic residues over residues 71–94 and 380–392; these read ELARPKPDAQTRATDRRTVSGLER and TRDEAAHRSREAA.

The protein belongs to the SctB/SipC family.

It localises to the secreted. The chain is Effector protein BipC (bipC) from Burkholderia pseudomallei (strain 1710b).